Here is a 160-residue protein sequence, read N- to C-terminus: Serine-protein kinase RsbW (160 aa).

It belongs to the anti-sigma-factor family.

It carries out the reaction L-seryl-[protein] + ATP = O-phospho-L-seryl-[protein] + ADP + H(+). It catalyses the reaction L-threonyl-[protein] + ATP = O-phospho-L-threonyl-[protein] + ADP + H(+). Negative regulator of sigma-B activity. Phosphorylates and inactivates its specific antagonist protein, RsbV. Upon phosphorylation of RsbV, RsbW is released and binds to sigma-B, thereby blocking its ability to form an RNA polymerase holoenzyme (E-sigma-B). In Bacillus velezensis (strain DSM 23117 / BGSC 10A6 / LMG 26770 / FZB42) (Bacillus amyloliquefaciens subsp. plantarum), this protein is Serine-protein kinase RsbW.